A 620-amino-acid chain; its full sequence is 1-deoxy-D-xylulose-5-phosphate synthase (620 aa).

Thiamine diphosphate is bound by residues His-75 and 116 to 118; that span reads AHS. Asp-147 serves as a coordination point for Mg(2+). Thiamine diphosphate contacts are provided by residues 148 to 149, Asn-177, Tyr-284, and Glu-366; that span reads GA. Asn-177 contributes to the Mg(2+) binding site.

It belongs to the transketolase family. DXPS subfamily. In terms of assembly, homodimer. Mg(2+) is required as a cofactor. The cofactor is thiamine diphosphate.

The catalysed reaction is D-glyceraldehyde 3-phosphate + pyruvate + H(+) = 1-deoxy-D-xylulose 5-phosphate + CO2. It participates in metabolic intermediate biosynthesis; 1-deoxy-D-xylulose 5-phosphate biosynthesis; 1-deoxy-D-xylulose 5-phosphate from D-glyceraldehyde 3-phosphate and pyruvate: step 1/1. In terms of biological role, catalyzes the acyloin condensation reaction between C atoms 2 and 3 of pyruvate and glyceraldehyde 3-phosphate to yield 1-deoxy-D-xylulose-5-phosphate (DXP). The chain is 1-deoxy-D-xylulose-5-phosphate synthase from Bordetella pertussis (strain Tohama I / ATCC BAA-589 / NCTC 13251).